The sequence spans 149 residues: 3-hydroxyacyl-[acyl-carrier-protein] dehydratase FabZ (149 aa).

Histidine 49 is an active-site residue.

This sequence belongs to the thioester dehydratase family. FabZ subfamily.

The protein resides in the cytoplasm. The enzyme catalyses a (3R)-hydroxyacyl-[ACP] = a (2E)-enoyl-[ACP] + H2O. Its function is as follows. Involved in unsaturated fatty acids biosynthesis. Catalyzes the dehydration of short chain beta-hydroxyacyl-ACPs and long chain saturated and unsaturated beta-hydroxyacyl-ACPs. This is 3-hydroxyacyl-[acyl-carrier-protein] dehydratase FabZ from Sulfurovum sp. (strain NBC37-1).